A 296-amino-acid polypeptide reads, in one-letter code: Protein RarD (296 aa).

Residues 1 to 11 (MDAKQTRQGVL) lie on the Cytoplasmic side of the membrane. The chain crosses the membrane as a helical span at residues 12–34 (LALAAYFIWGIAPAYFKLIYYVP). Positions 18-145 (FIWGIAPAYF…AICGVLVQLW (128 aa)) constitute an EamA domain. The Periplasmic segment spans residues 35-37 (ADE). A helical transmembrane segment spans residues 38 to 60 (ILTHRVIWSFFFMVVLMSICRQW). Over 61-72 (SYLKTLIQTPQK) the chain is Cytoplasmic. A helical transmembrane segment spans residues 73–95 (IFMLAVSAVLIGGNWLLFIWAVN). Over 96 to 99 (NHHM) the chain is Periplasmic. The helical transmembrane segment at 100–122 (LEASLGYFINPLVNIVLGMIFLG) threads the bilayer. The Cytoplasmic segment spans residues 123 to 128 (ERFRRM). A helical transmembrane segment spans residues 129–146 (QWLAVILAICGVLVQLWT). Over 147–149 (FGS) the chain is Periplasmic. The helical transmembrane segment at 150-167 (LPIIALGLAFSFAFYGLV) threads the bilayer. The Cytoplasmic portion of the chain corresponds to 168–179 (RKKIAVEAQTGM). The chain crosses the membrane as a helical span at residues 180–197 (LIETMWLLPVAAIYLFAI). The Periplasmic portion of the chain corresponds to 198–211 (ADSSTSHMGQNPMS). Residues 212-234 (LNLLLIAAGIVTTVPLLCFTAAA) traverse the membrane as a helical segment. At 235–238 (TRLR) the chain is on the cytoplasmic side. The chain crosses the membrane as a helical span at residues 239 to 261 (LSTLGFFQYIGPTLMFLLAVTFY). The Periplasmic segment spans residues 262 to 270 (GEKPGADKM). Residues 271-290 (VTFAFIWVALAIFVMDAIYT) traverse the membrane as a helical segment. The Cytoplasmic segment spans residues 291–296 (QRRTSK).

It belongs to the EamA transporter family.

It is found in the cell inner membrane. This Escherichia coli (strain K12) protein is Protein RarD (rarD).